We begin with the raw amino-acid sequence, 85 residues long: DNA-directed RNA polymerase subunit omega (85 aa).

The protein belongs to the RNA polymerase subunit omega family. In terms of assembly, the RNAP catalytic core consists of 2 alpha, 1 beta, 1 beta' and 1 omega subunit. When a sigma factor is associated with the core the holoenzyme is formed, which can initiate transcription.

It catalyses the reaction RNA(n) + a ribonucleoside 5'-triphosphate = RNA(n+1) + diphosphate. Functionally, promotes RNA polymerase assembly. Latches the N- and C-terminal regions of the beta' subunit thereby facilitating its interaction with the beta and alpha subunits. The protein is DNA-directed RNA polymerase subunit omega of Latilactobacillus sakei subsp. sakei (strain 23K) (Lactobacillus sakei subsp. sakei).